An 813-amino-acid chain; its full sequence is Leucine--tRNA ligase (813 aa).

Positions proline 39 to histidine 49 match the 'HIGH' region motif. Residues lysine 582–serine 586 carry the 'KMSKS' region motif. Residue lysine 585 participates in ATP binding.

The protein belongs to the class-I aminoacyl-tRNA synthetase family.

It localises to the cytoplasm. The enzyme catalyses tRNA(Leu) + L-leucine + ATP = L-leucyl-tRNA(Leu) + AMP + diphosphate. This chain is Leucine--tRNA ligase, found in Campylobacter hominis (strain ATCC BAA-381 / DSM 21671 / CCUG 45161 / LMG 19568 / NCTC 13146 / CH001A).